The following is a 71-amino-acid chain: GEECDCGSPANPCCDAATCKLRPGAQCADGLCCDQCRFIKKGTICRRARGDNPDDRCTGQSADCPRNHFHA.

Residues 1–71 (GEECDCGSPA…ADCPRNHFHA (71 aa)) enclose the Disintegrin domain. Disulfide bonds link cysteine 4–cysteine 19, cysteine 6–cysteine 14, cysteine 13–cysteine 36, cysteine 27–cysteine 33, cysteine 32–cysteine 57, and cysteine 45–cysteine 64. Residues 49 to 51 (RGD) carry the Cell attachment site motif.

It belongs to the venom metalloproteinase (M12B) family. P-II subfamily. P-IIa sub-subfamily. As to expression, expressed by the venom gland.

It localises to the secreted. Its function is as follows. Inhibits fibrinogen interaction with platelets. Acts by binding to alpha-IIb/beta-3 (ITGA2B/ITGB3) on the platelet surface and inhibits aggregation induced by ADP, thrombin, platelet-activating factor and collagen. Inhibits cell adhesion to vitronectin, probably by blocking its receptor integrin alpha-V/beta-3 (ITGAV/ITGB3), and to fibronectin in vitro. Shows little to no cytotoxicity in vitro. This chain is Disintegrin tzabcanin, found in Crotalus tzabcan (Yucatan neotropical rattlesnake).